The following is a 227-amino-acid chain: GTP:AMP phosphotransferase AK3, mitochondrial (227 aa).

Glycine 17, glycine 19, lysine 20, glycine 21, and threonine 22 together coordinate GTP. N6-succinyllysine is present on lysine 20. Lysine 34 carries the N6-acetyllysine modification. Phosphoserine is present on serine 37. The tract at residues 37–66 (SSGDLLRDNMLRGTEIGVLAKAFIDQGKLI) is NMP. Residues serine 38 and arginine 43 each contribute to the AMP site. Lysine 57 carries the post-translational modification N6-succinyllysine. Residue lysine 64 coordinates AMP. An N6-acetyllysine; alternate mark is found at lysine 64 and lysine 80. An N6-succinyllysine; alternate mark is found at lysine 64 and lysine 80. Residues glycine 91, arginine 94, and glutamine 98 each contribute to the AMP site. The segment at 127-164 (ARWIHPASGRVYNIEFNPPKTVGIDDLTGEPLIQREDD) is LID. GTP contacts are provided by arginine 128, tyrosine 138, asparagine 139, arginine 161, and arginine 172. N6-acetyllysine; alternate is present on residues lysine 174 and lysine 189. N6-succinyllysine; alternate is present on residues lysine 174 and lysine 189. Threonine 201 lines the GTP pocket. The residue at position 203 (lysine 203) is an N6-acetyllysine.

Belongs to the adenylate kinase family. AK3 subfamily. Monomer.

Its subcellular location is the mitochondrion matrix. The enzyme catalyses a ribonucleoside 5'-triphosphate + AMP = a ribonucleoside 5'-diphosphate + ADP. It carries out the reaction GTP + AMP = GDP + ADP. The catalysed reaction is ITP + AMP = IDP + ADP. Mitochondrial adenylate kinase with a specific GTP:AMP phosphotransferase activity. Could also use ITP as phosphate donor. Its physiological function is to recycle GTP into GDP which is necessary for the TCA cycle in the mitochondrial matrix. This chain is GTP:AMP phosphotransferase AK3, mitochondrial, found in Pongo abelii (Sumatran orangutan).